The following is a 177-amino-acid chain: CRIB domain-containing protein RIC8 (177 aa).

The CRIB domain occupies 17-30 (IGTPTDVKHVAHIG). Positions 72-89 (STRSRDIPRLPKSSRERS) are enriched in basic and acidic residues. The segment at 72–177 (STRSRDIPRL…SSTSDAGYLT (106 aa)) is disordered. The segment covering 158 to 171 (GSQVESISDSSSTS) has biased composition (low complexity).

In terms of biological role, functions as a downstream effector of Rho-related GTP binding proteins of the 'Rho of Plants' (ROPs) family. Participates in the propagation of ROP GTPase signals in specific cellular responses. The sequence is that of CRIB domain-containing protein RIC8 (RIC8) from Arabidopsis thaliana (Mouse-ear cress).